Here is a 277-residue protein sequence, read N- to C-terminus: MKKTQRKEIENVTNITGVRQIELWRRDDLQHPRLDEVAEEVPVALVYNGISHVVMMASPKDLEYFALGFSLSEGIIESPRDIFGMDVVPSCNGLEVQIELSSRRFMGLKERRRALAGRTGCGVCGVEQLNDIGKPVQPLPFTQTFDLNKLDDALRHLNDFQPVGRLTGCTHAAAWMLPSGELVGGHEDVGRHVALDKLLGRRSQEGESWQQGAVLVSSRASYEMVQKSAMCGVEILFAVSAATTLAVEVAERCNLTLVGFCKPGRATVYTHPQRLSN.

The active-site Cysteine persulfide intermediate is cysteine 121. 260–265 contributes to the Mo-bis(molybdopterin guanine dinucleotide) binding site; the sequence is FCKPGR.

It belongs to the FdhD family.

It is found in the cytoplasm. In terms of biological role, required for formate dehydrogenase (FDH) activity. Acts as a sulfur carrier protein that transfers sulfur from IscS to the molybdenum cofactor prior to its insertion into FDH. This Shigella flexneri serotype 5b (strain 8401) protein is Sulfur carrier protein FdhD.